The following is a 305-amino-acid chain: NADH-cytochrome b5 reductase 1 (305 aa).

Residues V8–Y28 traverse the membrane as a helical segment. One can recognise an FAD-binding FR-type domain in the interval N44–A156. Residues D136–N166 and V175–L210 contribute to the FAD site.

It belongs to the flavoprotein pyridine nucleotide cytochrome reductase family. FAD is required as a cofactor.

The protein resides in the membrane. It carries out the reaction 2 Fe(III)-[cytochrome b5] + NADH = 2 Fe(II)-[cytochrome b5] + NAD(+) + H(+). Functionally, NADH-cytochrome b5 reductases are involved in desaturation and elongation of fatty acids, cholesterol biosynthesis, drug metabolism, and, in erythrocyte, methemoglobin reduction. The chain is NADH-cytochrome b5 reductase 1 (CYB5R1) from Bos taurus (Bovine).